Reading from the N-terminus, the 286-residue chain is Phosphoribosylaminoimidazole-succinocarboxamide synthase (286 aa).

This sequence belongs to the SAICAR synthetase family.

The enzyme catalyses 5-amino-1-(5-phospho-D-ribosyl)imidazole-4-carboxylate + L-aspartate + ATP = (2S)-2-[5-amino-1-(5-phospho-beta-D-ribosyl)imidazole-4-carboxamido]succinate + ADP + phosphate + 2 H(+). The protein operates within purine metabolism; IMP biosynthesis via de novo pathway; 5-amino-1-(5-phospho-D-ribosyl)imidazole-4-carboxamide from 5-amino-1-(5-phospho-D-ribosyl)imidazole-4-carboxylate: step 1/2. In Histophilus somni (strain 2336) (Haemophilus somnus), this protein is Phosphoribosylaminoimidazole-succinocarboxamide synthase.